Here is a 581-residue protein sequence, read N- to C-terminus: Proline--tRNA ligase (581 aa).

It belongs to the class-II aminoacyl-tRNA synthetase family. ProS type 1 subfamily. In terms of assembly, homodimer.

It localises to the cytoplasm. It carries out the reaction tRNA(Pro) + L-proline + ATP = L-prolyl-tRNA(Pro) + AMP + diphosphate. Functionally, catalyzes the attachment of proline to tRNA(Pro) in a two-step reaction: proline is first activated by ATP to form Pro-AMP and then transferred to the acceptor end of tRNA(Pro). As ProRS can inadvertently accommodate and process non-cognate amino acids such as alanine and cysteine, to avoid such errors it has two additional distinct editing activities against alanine. One activity is designated as 'pretransfer' editing and involves the tRNA(Pro)-independent hydrolysis of activated Ala-AMP. The other activity is designated 'posttransfer' editing and involves deacylation of mischarged Ala-tRNA(Pro). The misacylated Cys-tRNA(Pro) is not edited by ProRS. In Rhodococcus opacus (strain B4), this protein is Proline--tRNA ligase.